Reading from the N-terminus, the 370-residue chain is MEISTLTTILDTTLAVIFTWVAYKTGQIIWKYTPYSYPNARIRAMEARLLTDQRFSELAESKTLQNFVVSLEDTDYSPRLASLQSYNLYEIERALDLSLVDLVELMIKIMPKRIRGLFEILLEEWDVRNITNVIKAKLSNLPPQDFIIPAGRMFPKVKAMVESKTMEEILVILEGTEYEEPLRKLLLKEIDLQAFELELYKIYYSKLLKYASSRKGEEKLISEEFIKMLIDYRNISIILRAKLSGMPSEEIKSLLIPGGMLSRAVLESMLSSEDVMMALGELEGTRYGDALKDVREAVEGGRIDKVEEALRRYILNRMKELSQFYPLSVAVALTYLLERESEVRKLKAVAKLIEDKAKPEKIKELIGEMA.

The protein belongs to the V-ATPase V0D/AC39 subunit family. As to quaternary structure, has multiple subunits with at least A(3), B(3), C, D, E, F, H, I and proteolipid K(x).

It is found in the cell membrane. Component of the A-type ATP synthase that produces ATP from ADP in the presence of a proton gradient across the membrane. This Pyrococcus horikoshii (strain ATCC 700860 / DSM 12428 / JCM 9974 / NBRC 100139 / OT-3) protein is A-type ATP synthase subunit C.